Reading from the N-terminus, the 126-residue chain is Protein ApaG (126 aa).

One can recognise an ApaG domain in the interval 2–126 (DVIQPCIKIQ…FRLAIPNVLN (125 aa)).

In Vibrio campbellii (strain ATCC BAA-1116), this protein is Protein ApaG.